Consider the following 543-residue polypeptide: CTP synthase (543 aa).

The tract at residues 1–265 is amidoligase domain; the sequence is MTRYVFITGG…DREVLRHFGL (265 aa). A CTP-binding site is contributed by serine 13. Residue serine 13 participates in UTP binding. Position 14-19 (14-19) interacts with ATP; the sequence is SLGKGI. Tyrosine 54 provides a ligand contact to L-glutamine. Aspartate 71 contributes to the ATP binding site. Residues aspartate 71 and glutamate 139 each coordinate Mg(2+). Residues 146–148, 186–191, and lysine 222 each bind CTP; these read DIE and KTKPTQ. UTP-binding positions include 186–191 and lysine 222; that span reads KTKPTQ. Valine 240 contributes to the ATP binding site. One can recognise a Glutamine amidotransferase type-1 domain in the interval 291–542; the sequence is TIAVVGKYTN…IEAAVKQMRL (252 aa). Glycine 353 lines the L-glutamine pocket. Catalysis depends on cysteine 380, which acts as the Nucleophile; for glutamine hydrolysis. L-glutamine contacts are provided by residues 381–384, glutamate 404, and arginine 470; that span reads FGMQ. Residues histidine 515 and glutamate 517 contribute to the active site.

Belongs to the CTP synthase family. In terms of assembly, homotetramer.

It catalyses the reaction UTP + L-glutamine + ATP + H2O = CTP + L-glutamate + ADP + phosphate + 2 H(+). The catalysed reaction is L-glutamine + H2O = L-glutamate + NH4(+). The enzyme catalyses UTP + NH4(+) + ATP = CTP + ADP + phosphate + 2 H(+). The protein operates within pyrimidine metabolism; CTP biosynthesis via de novo pathway; CTP from UDP: step 2/2. Its activity is regulated as follows. Allosterically activated by GTP, when glutamine is the substrate; GTP has no effect on the reaction when ammonia is the substrate. The allosteric effector GTP functions by stabilizing the protein conformation that binds the tetrahedral intermediate(s) formed during glutamine hydrolysis. Inhibited by the product CTP, via allosteric rather than competitive inhibition. Functionally, catalyzes the ATP-dependent amination of UTP to CTP with either L-glutamine or ammonia as the source of nitrogen. Regulates intracellular CTP levels through interactions with the four ribonucleotide triphosphates. The chain is CTP synthase from Acidiphilium cryptum (strain JF-5).